Consider the following 146-residue polypeptide: 3-hydroxyacyl-[acyl-carrier-protein] dehydratase FabZ (146 aa).

Residue H47 is part of the active site.

This sequence belongs to the thioester dehydratase family. FabZ subfamily.

Its subcellular location is the cytoplasm. The catalysed reaction is a (3R)-hydroxyacyl-[ACP] = a (2E)-enoyl-[ACP] + H2O. Functionally, involved in unsaturated fatty acids biosynthesis. Catalyzes the dehydration of short chain beta-hydroxyacyl-ACPs and long chain saturated and unsaturated beta-hydroxyacyl-ACPs. This Methylococcus capsulatus (strain ATCC 33009 / NCIMB 11132 / Bath) protein is 3-hydroxyacyl-[acyl-carrier-protein] dehydratase FabZ.